The following is a 181-amino-acid chain: Translationally-controlled tumor protein homolog (181 aa).

Positions 1–181 constitute a TCTP domain; the sequence is MLIYKDIFTD…VKEAILEEKC (181 aa).

Belongs to the TCTP family.

The protein localises to the cytoplasm. In terms of biological role, involved in calcium binding and microtubule stabilization. This chain is Translationally-controlled tumor protein homolog (tct-1), found in Caenorhabditis briggsae.